We begin with the raw amino-acid sequence, 225 residues long: Small ribosomal subunit protein uS3 (225 aa).

Positions 38 to 106 constitute a KH type-2 domain; it reads IRKFIQSRFS…PVNLNIIEVK (69 aa).

Belongs to the universal ribosomal protein uS3 family. Part of the 30S ribosomal subunit. Forms a tight complex with proteins S10 and S14.

Its function is as follows. Binds the lower part of the 30S subunit head. Binds mRNA in the 70S ribosome, positioning it for translation. The chain is Small ribosomal subunit protein uS3 from Leptospira borgpetersenii serovar Hardjo-bovis (strain JB197).